The following is a 68-amino-acid chain: Copper transport protein ATOX1 (68 aa).

An HMA domain is found at 1-63 (MPKHEFSVDM…TLKKTGKTVS (63 aa)). Residues cysteine 12 and cysteine 15 each coordinate Cu cation. Residue serine 47 is modified to Phosphoserine. The residue at position 60 (lysine 60) is an N6-acetyllysine.

Belongs to the ATX1 family. In terms of assembly, homodimer. Interacts with ATP7B. Interacts with ATP7A. Interacts (via dimer form) with SLC31A1 (via C-terminal domain); this interaction improves ATOX1 stability and controls intracellular Cu(I) levels. As to expression, ubiquitous.

Functionally, binds and deliver cytosolic copper to the copper ATPase proteins. May be important in cellular antioxidant defense. This chain is Copper transport protein ATOX1, found in Homo sapiens (Human).